A 97-amino-acid polypeptide reads, in one-letter code: Aspartyl/glutamyl-tRNA(Asn/Gln) amidotransferase subunit C (97 aa).

This sequence belongs to the GatC family. As to quaternary structure, heterotrimer of A, B and C subunits.

The enzyme catalyses L-glutamyl-tRNA(Gln) + L-glutamine + ATP + H2O = L-glutaminyl-tRNA(Gln) + L-glutamate + ADP + phosphate + H(+). It carries out the reaction L-aspartyl-tRNA(Asn) + L-glutamine + ATP + H2O = L-asparaginyl-tRNA(Asn) + L-glutamate + ADP + phosphate + 2 H(+). Functionally, allows the formation of correctly charged Asn-tRNA(Asn) or Gln-tRNA(Gln) through the transamidation of misacylated Asp-tRNA(Asn) or Glu-tRNA(Gln) in organisms which lack either or both of asparaginyl-tRNA or glutaminyl-tRNA synthetases. The reaction takes place in the presence of glutamine and ATP through an activated phospho-Asp-tRNA(Asn) or phospho-Glu-tRNA(Gln). The chain is Aspartyl/glutamyl-tRNA(Asn/Gln) amidotransferase subunit C from Prochlorococcus marinus (strain MIT 9211).